A 326-amino-acid chain; its full sequence is D-amino-acid oxidase (326 aa).

FAD contacts are provided by Gly-14, Val-15, Ile-16, Asp-36, Ser-44, Ala-48, Ala-49, Ile-50, and Val-157. D-proline is bound by residues Tyr-219 and Arg-274. Positions 219 and 274 each coordinate D-serine. Residues Arg-274, Gly-299, Gly-300, Gly-302, and Thr-304 each contribute to the FAD site. Gly-300 is a D-proline binding site. Gly-300 contributes to the D-serine binding site.

The protein belongs to the DAMOX/DASOX family. In terms of assembly, homodimer. FAD serves as cofactor.

It is found in the cytoplasm. The protein localises to the secreted. Its subcellular location is the cell wall. The catalysed reaction is a D-alpha-amino acid + O2 + H2O = a 2-oxocarboxylate + H2O2 + NH4(+). It carries out the reaction D-phenylalanine + O2 + H2O = 3-phenylpyruvate + H2O2 + NH4(+). The enzyme catalyses D-lysine + O2 + H2O = 6-amino-2-oxohexanoate + H2O2 + NH4(+). It catalyses the reaction D-methionine + O2 + H2O = 4-methylsulfanyl-2-oxobutanoate + H2O2 + NH4(+). The catalysed reaction is D-arginine + O2 + H2O = 5-guanidino-2-oxopentanoate + H2O2 + NH4(+). It carries out the reaction D-ornithine + O2 + H2O = 5-amino-2-oxopentanoate + H2O2 + NH4(+). The enzyme catalyses D-leucine + O2 + H2O = 4-methyl-2-oxopentanoate + H2O2 + NH4(+). It catalyses the reaction D-alanine + O2 + H2O = pyruvate + H2O2 + NH4(+). The catalysed reaction is D-valine + O2 + H2O = 3-methyl-2-oxobutanoate + H2O2 + NH4(+). It carries out the reaction D-histidine + O2 + H2O = 3-(imidazol-5-yl)pyruvate + H2O2 + NH4(+). Its function is as follows. Catalyzes the oxidative deamination of D-amino acids with broad substrate specificity. The polypeptide is D-amino-acid oxidase (Glutamicibacter protophormiae (Brevibacterium protophormiae)).